Here is a 201-residue protein sequence, read N- to C-terminus: Small ribosomal subunit protein uS4 (201 aa).

In terms of domain architecture, S4 RNA-binding spans 91–157 (SRLDNVVYRA…LPFQVARETV (67 aa)).

Belongs to the universal ribosomal protein uS4 family. Part of the 30S ribosomal subunit. Contacts protein S5. The interaction surface between S4 and S5 is involved in control of translational fidelity.

In terms of biological role, one of the primary rRNA binding proteins, it binds directly to 16S rRNA where it nucleates assembly of the body of the 30S subunit. With S5 and S12 plays an important role in translational accuracy. The protein is Small ribosomal subunit protein uS4 of Rhodococcus erythropolis (strain PR4 / NBRC 100887).